The chain runs to 485 residues: Signal recognition particle protein (485 aa).

GTP contacts are provided by residues 107–114, 189–193, and 247–250; these read GLQGAGKT, DTAGR, and TKLD. Residues 452-485 are disordered; that stretch reads GFGGGAPAPQPGFRGYGPPKKQKKGSKKKKGFGL. Over residues 471-485 the composition is skewed to basic residues; that stretch reads KKQKKGSKKKKGFGL.

Belongs to the GTP-binding SRP family. SRP54 subfamily. As to quaternary structure, part of the signal recognition particle protein translocation system, which is composed of SRP and FtsY.

The protein resides in the cytoplasm. The enzyme catalyses GTP + H2O = GDP + phosphate + H(+). Its function is as follows. Involved in targeting and insertion of nascent membrane proteins into the cytoplasmic membrane. Binds to the hydrophobic signal sequence of the ribosome-nascent chain (RNC) as it emerges from the ribosomes. The SRP-RNC complex is then targeted to the cytoplasmic membrane where it interacts with the SRP receptor FtsY. This chain is Signal recognition particle protein, found in Synechococcus elongatus (strain ATCC 33912 / PCC 7942 / FACHB-805) (Anacystis nidulans R2).